The chain runs to 318 residues: Aspartate carbamoyltransferase catalytic subunit (318 aa).

Positions 59 and 60 each coordinate carbamoyl phosphate. Position 87 (Lys87) interacts with L-aspartate. Residues Arg109, His137, and Gln140 each coordinate carbamoyl phosphate. Positions 170 and 224 each coordinate L-aspartate. Positions 265 and 266 each coordinate carbamoyl phosphate.

Belongs to the aspartate/ornithine carbamoyltransferase superfamily. ATCase family. In terms of assembly, heterododecamer (2C3:3R2) of six catalytic PyrB chains organized as two trimers (C3), and six regulatory PyrI chains organized as three dimers (R2).

The enzyme catalyses carbamoyl phosphate + L-aspartate = N-carbamoyl-L-aspartate + phosphate + H(+). The protein operates within pyrimidine metabolism; UMP biosynthesis via de novo pathway; (S)-dihydroorotate from bicarbonate: step 2/3. Catalyzes the condensation of carbamoyl phosphate and aspartate to form carbamoyl aspartate and inorganic phosphate, the committed step in the de novo pyrimidine nucleotide biosynthesis pathway. This chain is Aspartate carbamoyltransferase catalytic subunit, found in Rhizobium etli (strain CIAT 652).